The chain runs to 360 residues: DNA polymerase IV (360 aa).

Residues 8-189 form the UmuC domain; sequence IIHVDMDCFF…LPLEKIPGVG (182 aa). Positions 12 and 107 each coordinate Mg(2+). E108 is a catalytic residue.

Belongs to the DNA polymerase type-Y family. Monomer. The cofactor is Mg(2+).

It is found in the cytoplasm. The enzyme catalyses DNA(n) + a 2'-deoxyribonucleoside 5'-triphosphate = DNA(n+1) + diphosphate. In terms of biological role, poorly processive, error-prone DNA polymerase involved in untargeted mutagenesis. Copies undamaged DNA at stalled replication forks, which arise in vivo from mismatched or misaligned primer ends. These misaligned primers can be extended by PolIV. Exhibits no 3'-5' exonuclease (proofreading) activity. May be involved in translesional synthesis, in conjunction with the beta clamp from PolIII. This is DNA polymerase IV from Vibrio cholerae serotype O1 (strain ATCC 39315 / El Tor Inaba N16961).